The following is a 1077-amino-acid chain: Response regulator SSK1 (1077 aa).

The region spanning N854–G1000 is the Response regulatory domain. D903 carries the post-translational modification 4-aspartylphosphate.

The protein belongs to the SSK1 family.

It is found in the cytoplasm. In terms of biological role, two-domain response regulator protein in the two-component signal transduction system of the HOG1 pathway. Involved in multi-stress responses and is essential for conidiation, secondary metabolism, autophagy and endocyrosis. In addition, regulates mycelial growth, cell nucleus development, septum formation, and organelle development. Also regulates trap formation and thus plays a crucial role in pathogenicity. The chain is Response regulator SSK1 from Arthrobotrys oligospora (strain ATCC 24927 / CBS 115.81 / DSM 1491) (Nematode-trapping fungus).